The following is an 801-amino-acid chain: Bromodomain-containing protein 2 (801 aa).

Residue methionine 1 is modified to N-acetylmethionine. At threonine 6 the chain carries Phosphothreonine. Serine 37 bears the Phosphoserine mark. The interval alanine 53 to glycine 73 is disordered. The Bromo 1 domain occupies arginine 74 to methionine 180. A protein-binding residues include aspartate 112, tyrosine 155, asparagine 156, lysine 157, aspartate 160, and aspartate 161. Disordered regions lie at residues proline 268–glutamine 349, glutamate 456–lysine 647, and glutamate 737–glycine 801. The segment covering threonine 285–serine 298 has biased composition (low complexity). 3 positions are modified to phosphoserine: serine 298, serine 301, and serine 305. Positions methionine 316–proline 332 are enriched in basic and acidic residues. The region spanning glycine 344 to methionine 453 is the Bromo 2 domain. Positions serine 481–glutamate 514 are enriched in acidic residues. Residues lysine 544–arginine 566 show a composition bias toward basic residues. The Nuclear localization signal motif lies at lysine 555–lysine 559. Over residues glycine 592–glycine 612 the composition is skewed to gly residues. In terms of domain architecture, NET spans aspartate 632–proline 714. Serine 633 carries the post-translational modification Phosphoserine. Residues serine 763–threonine 795 show a composition bias toward low complexity.

Belongs to the BET family. As to quaternary structure, homodimer. Interacts with E2F1. Interacts with (acetylated) STAT3; promoting STAT3 recruitment to chromatin. Interacts with CTCF; promoting BRD2 recruitment to chromatin. In terms of assembly, (Microbial infection) Interacts with herpes virus 8 protein LANA1.

The protein resides in the nucleus. Its subcellular location is the chromosome. Its activity is regulated as follows. Inhibited by JQ1, a thieno-triazolo-1,4-diazepine derivative, which specifically inhibits members of the BET family (BRD2, BRD3 and BRD4). The first bromo domain is inhibited by GSK778 (iBET-BD1), which specifically inhibits the first bromo domain of members of the BET family (BRD2, BRD3 and BRD4). The second bromo domain is inhibited by ABBV-744, which specifically inhibits the second bromo domain of members of the BET family (BRD2, BRD3 and BRD4). The second bromo domain is inhibited by GSK046 (iBET-BD2), which specifically inhibits the second bromo domain of members of the BET family (BRD2, BRD3 and BRD4). Its function is as follows. Chromatin reader protein that specifically recognizes and binds histone H4 acetylated at 'Lys-5' and 'Lys-12' (H4K5ac and H4K12ac, respectively), thereby controlling gene expression and remodeling chromatin structures. Recruits transcription factors and coactivators to target gene sites, and activates RNA polymerase II machinery for transcriptional elongation. Plays a key role in genome compartmentalization via its association with CTCF and cohesin: recruited to chromatin by CTCF and promotes formation of topologically associating domains (TADs) via its ability to bind acetylated histones, contributing to CTCF boundary formation and enhancer insulation. Also recognizes and binds acetylated non-histone proteins, such as STAT3. Involved in inflammatory response by regulating differentiation of naive CD4(+) T-cells into T-helper Th17: recognizes and binds STAT3 acetylated at 'Lys-87', promoting STAT3 recruitment to chromatin. In addition to acetylated lysines, also recognizes and binds lysine residues on histones that are both methylated and acetylated on the same side chain to form N6-acetyl-N6-methyllysine (Kacme), an epigenetic mark of active chromatin associated with increased transcriptional initiation. Specifically binds histone H4 acetyl-methylated at 'Lys-5' and 'Lys-12' (H4K5acme and H4K12acme, respectively). The sequence is that of Bromodomain-containing protein 2 from Homo sapiens (Human).